Consider the following 263-residue polypeptide: L-aspartate dehydrogenase (263 aa).

The NAD(+) site is built by Ala-120 and Asn-186. Residue His-216 is part of the active site.

Belongs to the L-aspartate dehydrogenase family.

It carries out the reaction L-aspartate + NADP(+) + H2O = oxaloacetate + NH4(+) + NADPH + H(+). The catalysed reaction is L-aspartate + NAD(+) + H2O = oxaloacetate + NH4(+) + NADH + H(+). The protein operates within cofactor biosynthesis; NAD(+) biosynthesis; iminoaspartate from L-aspartate (dehydrogenase route): step 1/1. Specifically catalyzes the NAD or NADP-dependent dehydrogenation of L-aspartate to iminoaspartate. In Acinetobacter baumannii (strain AB307-0294), this protein is L-aspartate dehydrogenase.